Reading from the N-terminus, the 149-residue chain is Transcription antitermination protein NusB (149 aa).

The protein belongs to the NusB family.

Functionally, involved in transcription antitermination. Required for transcription of ribosomal RNA (rRNA) genes. Binds specifically to the boxA antiterminator sequence of the ribosomal RNA (rrn) operons. The sequence is that of Transcription antitermination protein NusB from Acinetobacter baumannii (strain SDF).